We begin with the raw amino-acid sequence, 384 residues long: Somatostatin receptor type 4 (384 aa).

The disordered stretch occupies residues 1 to 34 (MNTPATLPLGGEDTTWTPGINASWAPDEEEDAVR). Topologically, residues 1 to 41 (MNTPATLPLGGEDTTWTPGINASWAPDEEEDAVRSDGTGTA) are extracellular. An N-linked (GlcNAc...) asparagine glycan is attached at asparagine 21. A helical membrane pass occupies residues 42–69 (GMVTIQCIYALVCLVGLVGNALVIFVIL). Residues 70-79 (RYAKMKTATN) are Cytoplasmic-facing. A helical transmembrane segment spans residues 80–105 (IYLLNLAVADELFMLSVPFVASAAAL). At 106–116 (RHWPFGAVLCR) the chain is on the extracellular side. Cysteine 115 and cysteine 194 are oxidised to a cystine. The helical transmembrane segment at 117–138 (AVLSVDGLNMFTSVFCLTVLSV) threads the bilayer. Residues 139–160 (DRYVAVVHPLRAATYRRPSVAK) are Cytoplasmic-facing. The chain crosses the membrane as a helical span at residues 161–181 (LINLGVWLASLLVTLPIAVFA). Residues 182–203 (DTRPARGGEAVACNLHWPHPAW) are Extracellular-facing. A helical transmembrane segment spans residues 204–228 (SAVFVIYTFLLGFLLPVLAIGLCYL). At 229-254 (LIVGKMRAVALRAGWQQRRRSEKKIT) the chain is on the cytoplasmic side. A helical membrane pass occupies residues 255–280 (RLVLMVVTVFVLCWMPFYVVQLLNLF). Topologically, residues 281 to 287 (VTSLDAT) are extracellular. Residues 288 to 311 (VNHVSLILSYANSCANPILYGFLS) form a helical membrane-spanning segment. Residues 312–384 (DNFRRSFQRV…RVPFTKTTTF (73 aa)) lie on the Cytoplasmic side of the membrane. Cysteine 323 is lipidated: S-palmitoyl cysteine.

Belongs to the G-protein coupled receptor 1 family. Brain, lung, heart and islets. Moderate levels in the hippocampus, cortex and olfactory bulb.

The protein localises to the cell membrane. Functionally, receptor for somatostatin-14. The activity of this receptor is mediated by G proteins which inhibits adenylyl cyclase. It is functionally coupled not only to inhibition of adenylate cyclase, but also to activation of both arachidonate release and mitogen-activated protein (MAP) kinase cascade. The polypeptide is Somatostatin receptor type 4 (Sstr4) (Rattus norvegicus (Rat)).